The following is a 547-amino-acid chain: Delta-guaiene synthase 2 (547 aa).

3 residues coordinate Mg(2+): Asp-299, Asp-303, and Asp-444. Residues 299–303 (DDTYD) carry the DDXXD motif motif.

This sequence belongs to the terpene synthase family. The cofactor is Mg(2+).

The enzyme catalyses (2E,6E)-farnesyl diphosphate = delta-guaiene + diphosphate. The catalysed reaction is (2E,6E)-farnesyl diphosphate = alpha-guaiene + diphosphate. The protein operates within secondary metabolite biosynthesis; terpenoid biosynthesis. Sesquiterpene synthase involved in the biosynthesis of delta-guaiene (53.7%) and alpha-guaiene (44.6%), two structures composed of five- and seven-membered rings. Also produces 1.7% of alpha-humulene. The sequence is that of Delta-guaiene synthase 2 (C3) from Aquilaria crassna (Eagle wood).